Consider the following 348-residue polypeptide: [FeFe] hydrogenase maturase subunit HydE (348 aa).

In terms of domain architecture, Radical SAM core spans 49 to 268 (DEVHIRAIIE…LLPDSNIPAT (220 aa)). Cys63, Cys67, and Cys70 together coordinate [4Fe-4S] cluster. [2Fe-2S] cluster contacts are provided by Cys311, Cys319, and Cys322.

This sequence belongs to the radical SAM superfamily. HydE family. As to quaternary structure, monomer. Requires [4Fe-4S] cluster as cofactor. [2Fe-2S] cluster is required as a cofactor.

Functionally, required for the maturation of the [FeFe]-hydrogenase HydA. Catalyzes the reductive cleavage of S-adenosyl-L-methionine (in vitro), suggesting it may contribute to the biosynthesis of an essential sulfur-containing ligand that binds to the hydrogenase active site [2Fe-2S] cluster. This is [FeFe] hydrogenase maturase subunit HydE from Thermotoga maritima (strain ATCC 43589 / DSM 3109 / JCM 10099 / NBRC 100826 / MSB8).